We begin with the raw amino-acid sequence, 173 residues long: Transcription factor E (173 aa).

One can recognise an HTH TFE/IIEalpha-type domain in the interval 3 to 86; it reads DDPLVKSLLT…SWKFEEQEVI (84 aa).

It belongs to the TFE family. In terms of assembly, monomer. Interaction with RNA polymerase subunits RpoF and RpoE is necessary for Tfe stimulatory transcription activity. Able to interact with Tbp and RNA polymerase in the absence of DNA promoter. Interacts both with the preinitiation and elongation complexes.

Its function is as follows. Transcription factor that plays a role in the activation of archaeal genes transcribed by RNA polymerase. Facilitates transcription initiation by enhancing TATA-box recognition by TATA-box-binding protein (Tbp), and transcription factor B (Tfb) and RNA polymerase recruitment. Not absolutely required for transcription in vitro, but particularly important in cases where Tbp or Tfb function is not optimal. It dynamically alters the nucleic acid-binding properties of RNA polymerases by stabilizing the initiation complex and destabilizing elongation complexes. Seems to translocate with the RNA polymerase following initiation and acts by binding to the non template strand of the transcription bubble in elongation complexes. The sequence is that of Transcription factor E from Methanobrevibacter smithii (strain ATCC 35061 / DSM 861 / OCM 144 / PS).